We begin with the raw amino-acid sequence, 339 residues long: DNA-directed RNA polymerase subunit alpha (339 aa).

The segment at 1 to 233 is alpha N-terminal domain (alpha-NTD); sequence MVREEVAGST…DLFLPFLHAE (233 aa). The interval 264–339 is alpha C-terminal domain (alpha-CTD); the sequence is KKGIPLNCIF…IDLLKNKLSF (76 aa).

Belongs to the RNA polymerase alpha chain family. In terms of assembly, in plastids the minimal PEP RNA polymerase catalytic core is composed of four subunits: alpha, beta, beta', and beta''. When a (nuclear-encoded) sigma factor is associated with the core the holoenzyme is formed, which can initiate transcription.

The protein resides in the plastid. It localises to the chloroplast. It carries out the reaction RNA(n) + a ribonucleoside 5'-triphosphate = RNA(n+1) + diphosphate. Functionally, DNA-dependent RNA polymerase catalyzes the transcription of DNA into RNA using the four ribonucleoside triphosphates as substrates. The chain is DNA-directed RNA polymerase subunit alpha from Secale strictum (Mountain rye).